Reading from the N-terminus, the 391-residue chain is Esterase (391 aa).

A signal peptide spans methionine 1–alanine 26. The active-site Nucleophile is serine 41. N-linked (GlcNAc...) asparagine glycosylation is found at asparagine 186, asparagine 193, and asparagine 313. Residues aspartate 347 and histidine 350 contribute to the active site.

This sequence belongs to the 'GDSL' lipolytic enzyme family. In terms of processing, the N-terminus is blocked. Post-translationally, glycosylated.

In terms of biological role, has lipase and esterase activities. May be involved in plant defense. The sequence is that of Esterase from Hevea brasiliensis (Para rubber tree).